The following is a 597-amino-acid chain: Adenine deaminase 2 (597 aa).

Belongs to the metallo-dependent hydrolases superfamily. Adenine deaminase family. Mn(2+) serves as cofactor.

It carries out the reaction adenine + H2O + H(+) = hypoxanthine + NH4(+). In Agrobacterium fabrum (strain C58 / ATCC 33970) (Agrobacterium tumefaciens (strain C58)), this protein is Adenine deaminase 2.